The following is a 184-amino-acid chain: NADH-quinone oxidoreductase subunit B (184 aa).

Residues C37, C38, C103, and C132 each coordinate [4Fe-4S] cluster.

It belongs to the complex I 20 kDa subunit family. In terms of assembly, NDH-1 is composed of 14 different subunits. Subunits NuoB, C, D, E, F, and G constitute the peripheral sector of the complex. It depends on [4Fe-4S] cluster as a cofactor.

The protein localises to the cell membrane. It carries out the reaction a quinone + NADH + 5 H(+)(in) = a quinol + NAD(+) + 4 H(+)(out). In terms of biological role, NDH-1 shuttles electrons from NADH, via FMN and iron-sulfur (Fe-S) centers, to quinones in the respiratory chain. The immediate electron acceptor for the enzyme in this species is believed to be a menaquinone. Couples the redox reaction to proton translocation (for every two electrons transferred, four hydrogen ions are translocated across the cytoplasmic membrane), and thus conserves the redox energy in a proton gradient. This Mycobacterium sp. (strain JLS) protein is NADH-quinone oxidoreductase subunit B.